The sequence spans 198 residues: Molybdopterin synthase catalytic subunit (198 aa).

Substrate is bound by residues 107-108, Lys-123, and 130-132; these read HR and KKE.

The protein belongs to the MoaE family. MOCS2B subfamily. In terms of assembly, heterotetramer; composed of 2 small (MOCS2A) and 2 large (MOCS2B) subunits.

The protein localises to the cytoplasm. The enzyme catalyses 2 [molybdopterin-synthase sulfur-carrier protein]-C-terminal-Gly-aminoethanethioate + cyclic pyranopterin phosphate + H2O = molybdopterin + 2 [molybdopterin-synthase sulfur-carrier protein]-C-terminal Gly-Gly + 2 H(+). Its pathway is cofactor biosynthesis; molybdopterin biosynthesis. Its function is as follows. Catalytic subunit of the molybdopterin synthase complex, a complex that catalyzes the conversion of precursor Z into molybdopterin. Acts by mediating the incorporation of 2 sulfur atoms from thiocarboxylated MOCS2A into precursor Z to generate a dithiolene group. The chain is Molybdopterin synthase catalytic subunit from Arabidopsis thaliana (Mouse-ear cress).